Reading from the N-terminus, the 181-residue chain is MACGATLKRTIEFDPLLSPAASPKRRRCAPLSPSGPSPQKYLRLEPSPFGEVSPRLTAEQILYNIKQEYKRMQKRRHLESSFQPTDPCCSSEGQPQTFIPSGPTLPGTSATSPLRKEQPLFSLRQVGMICERLLKEREDNVREEYEEILTTKLAEQYDAFVKFTHDQIMRRFGEQPASYVS.

The tract at residues 18 to 48 (SPAASPKRRRCAPLSPSGPSPQKYLRLEPSP) is disordered. Residues 23 to 28 (PKRRRC) carry the Nuclear localization signal motif. The SYVS motif motif lies at 178-181 (SYVS).

This sequence belongs to the akirin family. In terms of assembly, homodimer. Interacts with actl6a/baf53a. Interacts with gmnn.

The protein localises to the nucleus. Its function is as follows. Molecular adapter that acts as a bridge between a variety of multiprotein complexes, and which is involved in embryonic development, immunity, myogenesis and brain development. Plays a key role in nuclear protein degradation by promoting import of proteasomes into the nucleus: acts by bridging fully assembled 20S proteasomes with nuclear import receptor ipo9. Involved in both neural precursor maintenance and terminal neural differentiation: bridges gmnn and actl6a/baf53a in neural progenitor cells, antagonizing the activity of gmnn, thereby suppressing sox2 expression. Also required for proper activation of neurod1 and neuronal differentiation. Involved in myogenesis: required for skeletal muscle formation and skeletal development, possibly by regulating expression of muscle differentiation factors. The sequence is that of Akirin-2 from Xenopus laevis (African clawed frog).